The sequence spans 791 residues: Sphingomyelin phosphodiesterase 4 (791 aa).

The helical transmembrane segment at 755-775 threads the bilayer; the sequence is LFALLSFGLFSSTGLILIISF.

Mg(2+) serves as cofactor.

Its subcellular location is the endoplasmic reticulum membrane. The protein resides in the golgi apparatus membrane. It is found in the nucleus envelope. It localises to the cell membrane. The protein localises to the sarcolemma. It catalyses the reaction a sphingomyelin + H2O = phosphocholine + an N-acylsphing-4-enine + H(+). Its function is as follows. Catalyzes the hydrolysis of membrane sphingomyelin to form phosphorylcholine and ceramide. It has a relevant role in the homeostasis of membrane sphingolipids, thereby influencing membrane integrity, and endoplasmic reticulum organization and function. May sensitize cells to DNA damage-induced apoptosis. In Danio rerio (Zebrafish), this protein is Sphingomyelin phosphodiesterase 4 (smpd4).